Consider the following 317-residue polypeptide: Tenomodulin (317 aa).

The Cytoplasmic portion of the chain corresponds to 1–30 (MAKNPPENCEGCHILNAEALKSKKICKSLK). The helical; Signal-anchor for type II membrane protein transmembrane segment at 31–50 (ICGLVFGILALTLIVLFWGS) threads the bilayer. Over 51–317 (KHFWPEVSKK…WWVARMLGRV (267 aa)) the chain is Extracellular. The BRICHOS domain occupies 93-186 (GNGTDETLEV…ICDNVTMYWI (94 aa)). A glycan (N-linked (GlcNAc...) asparagine) is linked at Asn-94. Cys-120 and Cys-178 form a disulfide bridge. The N-linked (GlcNAc...) asparagine glycan is linked to Asn-180. Ser-239 carries the post-translational modification Phosphoserine.

This sequence belongs to the chondromodulin-1 family. As to expression, widely expressed with highest expression in tendons and ligaments, in the diaphragm, eye and skeletal muscle. Expressed in neuronal cells of all brain regions. Very low expression, if any, in glial cells.

It is found in the membrane. Its subcellular location is the nucleus envelope. Functionally, may be an angiogenesis inhibitor. This chain is Tenomodulin (Tnmd), found in Mus musculus (Mouse).